Here is a 500-residue protein sequence, read N- to C-terminus: MSLKFTNTLSKKKEDFISINPNQVKIYCCGVTVYDLCHLGHARSYLNWDVLRRFLIWKGFEVKFVQNFTDIDDKIINRANKEGCSTDELSERNIDEFHKDMDTLSILRPTSMPRATKCLHQIINFIEELEQKKVAYSSNGDVYFSVDKHKNYGKLSGREIEDQIDNAAGRLKTNQKESKKNSLDFALWKKSNSGEVSYSSPWGNGRPGWHIECSAMVKQELGESIDIHLGGSDLIFPHHENEIAQSEACNGKELAKYWLHNGMVNVGGEKMSKSLGNFTTIRSLLEEDISPMTLRFFVLQTNYRKPLDFTEEALKAASKGWERLNNCLSFGYIYKIKDQSKNEIFLDKPIKKSANTKLDKNSFKLLSDFEKYMDDDLNTSGALSILFELSQPIRKIINFLKEKDINEVDQDELNQVFNKWELLSELAGVLGLKVNLNQEKPKNNPELDTNKIEELIKNRSLAKANKDFLLADKIRADLKNIGIDLIDKPKGVTEWKQLSD.

Cys-29 is a binding site for Zn(2+). Positions 31–41 match the 'HIGH' region motif; sequence VTVYDLCHLGH. Residues Cys-213, His-238, and Glu-242 each contribute to the Zn(2+) site. The 'KMSKS' region motif lies at 270-274; it reads KMSKS. Lys-273 contacts ATP.

This sequence belongs to the class-I aminoacyl-tRNA synthetase family. As to quaternary structure, monomer. Requires Zn(2+) as cofactor.

The protein localises to the cytoplasm. The enzyme catalyses tRNA(Cys) + L-cysteine + ATP = L-cysteinyl-tRNA(Cys) + AMP + diphosphate. This Prochlorococcus marinus (strain NATL2A) protein is Cysteine--tRNA ligase.